Consider the following 384-residue polypeptide: S-adenosylmethionine synthase (384 aa).

An ATP-binding site is contributed by H15. D17 contacts Mg(2+). Position 43 (E43) interacts with K(+). Residues E56 and Q99 each coordinate L-methionine. The tract at residues 99 to 109 (QSPDINQGVDR) is flexible loop. ATP contacts are provided by residues 164–166 (DAK), 230–231 (RF), D239, 245–246 (RK), A262, and K266. Residue D239 participates in L-methionine binding. An L-methionine-binding site is contributed by K270.

It belongs to the AdoMet synthase family. As to quaternary structure, homotetramer; dimer of dimers. It depends on Mg(2+) as a cofactor. K(+) is required as a cofactor.

It is found in the cytoplasm. The catalysed reaction is L-methionine + ATP + H2O = S-adenosyl-L-methionine + phosphate + diphosphate. The protein operates within amino-acid biosynthesis; S-adenosyl-L-methionine biosynthesis; S-adenosyl-L-methionine from L-methionine: step 1/1. Functionally, catalyzes the formation of S-adenosylmethionine (AdoMet) from methionine and ATP. The overall synthetic reaction is composed of two sequential steps, AdoMet formation and the subsequent tripolyphosphate hydrolysis which occurs prior to release of AdoMet from the enzyme. The chain is S-adenosylmethionine synthase from Cronobacter sakazakii (strain ATCC BAA-894) (Enterobacter sakazakii).